The following is a 426-amino-acid chain: Synaptotagmin-13 (426 aa).

At Met-1–Pro-6 the chain is on the vesicular side. The helical transmembrane segment at Val-7–Leu-29 threads the bilayer. At Cys-30–Leu-426 the chain is on the cytoplasmic side. C2 domains follow at residues Gln-158–Gly-275 and Gly-287–His-422.

Belongs to the synaptotagmin family. Interacts with NRXN1. Expressed in brain, heart, spleen, lung and testis.

It localises to the cytoplasmic vesicle membrane. Its function is as follows. May be involved in transport vesicle docking to the plasma membrane. This is Synaptotagmin-13 (Syt13) from Mus musculus (Mouse).